We begin with the raw amino-acid sequence, 200 residues long: Peroxiredoxin (200 aa).

Positions 6–165 (AQIGKPAPEF…TLRLVQAFQH (160 aa)) constitute a Thioredoxin domain. The active-site Cysteine sulfenic acid (-SOH) intermediate is the C52.

The protein belongs to the peroxiredoxin family. AhpC/Prx1 subfamily. In terms of assembly, homodimer; disulfide-linked, upon oxidation.

It carries out the reaction a hydroperoxide + [thioredoxin]-dithiol = an alcohol + [thioredoxin]-disulfide + H2O. In terms of biological role, thiol-specific peroxidase that catalyzes the reduction of hydrogen peroxide and organic hydroperoxides to water and alcohols, respectively. Plays a role in cell protection against oxidative stress by detoxifying peroxides and as sensor of hydrogen peroxide-mediated signaling events. This Cynops pyrrhogaster (Japanese fire-bellied newt) protein is Peroxiredoxin.